A 330-amino-acid chain; its full sequence is Aspartate--ammonia ligase (330 aa).

It belongs to the class-II aminoacyl-tRNA synthetase family. AsnA subfamily.

The protein localises to the cytoplasm. The catalysed reaction is L-aspartate + NH4(+) + ATP = L-asparagine + AMP + diphosphate + H(+). The protein operates within amino-acid biosynthesis; L-asparagine biosynthesis; L-asparagine from L-aspartate (ammonia route): step 1/1. The sequence is that of Aspartate--ammonia ligase from Escherichia coli O7:K1 (strain IAI39 / ExPEC).